A 268-amino-acid polypeptide reads, in one-letter code: Shikimate kinase (268 aa).

Residue P70–A80 coordinates ATP.

Belongs to the GHMP kinase family. Archaeal shikimate kinase subfamily.

Its subcellular location is the cytoplasm. The enzyme catalyses shikimate + ATP = 3-phosphoshikimate + ADP + H(+). It functions in the pathway metabolic intermediate biosynthesis; chorismate biosynthesis; chorismate from D-erythrose 4-phosphate and phosphoenolpyruvate: step 5/7. The chain is Shikimate kinase (aroK) from Thermoplasma acidophilum (strain ATCC 25905 / DSM 1728 / JCM 9062 / NBRC 15155 / AMRC-C165).